The chain runs to 332 residues: uncharacterized protein (332 aa).

Belongs to the bacterial solute-binding protein 1 family. WtpA subfamily.

This is an uncharacterized protein from Methanococcus maripaludis (strain DSM 14266 / JCM 13030 / NBRC 101832 / S2 / LL).